Reading from the N-terminus, the 242-residue chain is Probable transcriptional regulatory protein EF_0663 (242 aa).

Over residues 1-14 the composition is skewed to polar residues; it reads MSGHSKWSNIQGRK. Residues 1–22 form a disordered region; that stretch reads MSGHSKWSNIQGRKNAQDAKRG.

This sequence belongs to the TACO1 family.

The protein resides in the cytoplasm. The protein is Probable transcriptional regulatory protein EF_0663 of Enterococcus faecalis (strain ATCC 700802 / V583).